Consider the following 373-residue polypeptide: Deoxyguanosinetriphosphate triphosphohydrolase-like protein 1 (373 aa).

The tract at residues 21-43 (RSSEARRAVPEAPSETRTAYQKD) is disordered. One can recognise an HD domain in the interval 76-198 (RLTHTLEVQQ…VDAADALAYT (123 aa)).

The protein belongs to the dGTPase family. Type 2 subfamily.

This is Deoxyguanosinetriphosphate triphosphohydrolase-like protein 1 from Deinococcus radiodurans (strain ATCC 13939 / DSM 20539 / JCM 16871 / CCUG 27074 / LMG 4051 / NBRC 15346 / NCIMB 9279 / VKM B-1422 / R1).